A 124-amino-acid chain; its full sequence is Fluoride-specific ion channel FluC (124 aa).

The next 4 helical transmembrane spans lie at Y3–V23, T36–F56, L66–A86, and L100–I120. Na(+)-binding residues include G74 and T77.

It belongs to the fluoride channel Fluc/FEX (TC 1.A.43) family.

The protein resides in the cell inner membrane. The catalysed reaction is fluoride(in) = fluoride(out). Na(+) is not transported, but it plays an essential structural role and its presence is essential for fluoride channel function. Fluoride-specific ion channel. Important for reducing fluoride concentration in the cell, thus reducing its toxicity. In Rhodopseudomonas palustris (strain BisB5), this protein is Fluoride-specific ion channel FluC.